A 138-amino-acid polypeptide reads, in one-letter code: uncharacterized protein (138 aa).

An N-terminal signal peptide occupies residues 1–35 (MVAPAARVFLRAVRAALTSTVPDLLCLLARGSPRG).

As to expression, isoform 1 is highly expressed in small intestine, testis and kidney, medium expressed in brain and heart and low expressed in colon; it could not be detected in liver, adrenal gland and pancreas.

The protein localises to the secreted. This is an uncharacterized protein from Homo sapiens (Human).